The primary structure comprises 252 residues: GTP cyclohydrolase 1 type 2 homolog (252 aa).

Positions 63, 64, 101, 220, and 224 each coordinate a divalent metal cation.

Belongs to the GTP cyclohydrolase I type 2/NIF3 family. As to quaternary structure, homohexamer.

This is GTP cyclohydrolase 1 type 2 homolog from Vibrio cholerae serotype O1 (strain ATCC 39315 / El Tor Inaba N16961).